The chain runs to 353 residues: Ferredoxin--NADP reductase (353 aa).

Threonine 25, glutamate 44, glutamine 52, tyrosine 57, valine 97, phenylalanine 132, aspartate 298, and serine 339 together coordinate FAD.

It belongs to the ferredoxin--NADP reductase type 2 family. Homodimer. FAD serves as cofactor.

It carries out the reaction 2 reduced [2Fe-2S]-[ferredoxin] + NADP(+) + H(+) = 2 oxidized [2Fe-2S]-[ferredoxin] + NADPH. The chain is Ferredoxin--NADP reductase from Chlorobium phaeovibrioides (strain DSM 265 / 1930) (Prosthecochloris vibrioformis (strain DSM 265)).